Here is a 91-residue protein sequence, read N- to C-terminus: Small ribosomal subunit protein uS19 (91 aa).

This sequence belongs to the universal ribosomal protein uS19 family.

Functionally, protein S19 forms a complex with S13 that binds strongly to the 16S ribosomal RNA. This Pseudomonas fluorescens (strain Pf0-1) protein is Small ribosomal subunit protein uS19.